The sequence spans 280 residues: Glycoprotein G (280 aa).

Residues 1–24 (MGHSGENVLCVALLAIYLAAGGAA) form the signal peptide. Residues Asn-85 and Asn-111 are each glycosylated (N-linked (GlcNAc...) asparagine; by host). Residues 191-218 (ESSEERVVATDSDSGSCEDDEKEEKSDC) are disordered.

Belongs to the alphaherpesvirinae glycoprotein G family.

This chain is Glycoprotein G (gG), found in Psittacid herpesvirus 1 (isolate Amazon parrot/-/97-0001/1997) (PsHV-1).